A 163-amino-acid chain; its full sequence is Nucleotide-binding protein SACE_6882 (163 aa).

The protein belongs to the YajQ family.

Functionally, nucleotide-binding protein. The protein is Nucleotide-binding protein SACE_6882 of Saccharopolyspora erythraea (strain ATCC 11635 / DSM 40517 / JCM 4748 / NBRC 13426 / NCIMB 8594 / NRRL 2338).